Reading from the N-terminus, the 1141-residue chain is Collagen alpha-1(XXVIII) chain (1141 aa).

Residues 1–20 (MRRRDVAFCLLLLPAFMTQA) form the signal peptide. In terms of domain architecture, VWFA 1 spans 48 to 227 (DVVFILDSSE…TLVDRIQERL (180 aa)). The tract at residues 242-770 (CEKGEPGDPG…KQGLQGPKGD (529 aa)) is disordered. 5 consecutive Collagen-like domains span residues 243 to 300 (EKGE…RGEC), 301 to 358 (GKPG…GAPG), 501 to 544 (GPKG…MPGK), 545 to 588 (GQPG…MPGA), and 733 to 769 (GQKGEHGDRGDVGRKGEKGETGEPGSPGKQGLQGPKG). Positions 291–311 (KGDKGERGECGKPGMKGDKGP) are enriched in basic and acidic residues. The span at 335–344 (PKGFQGNKGE) shows a compositional bias: low complexity. The segment covering 345-356 (PGPPGPYGPPGA) has biased composition (pro residues). Over residues 735-753 (KGEHGDRGDVGRKGEKGET) the composition is skewed to basic and acidic residues. A VWFA 2 domain is found at 798–976 (ELVFVIDSSE…TLQDTLKQKL (179 aa)). The BPTI/Kunitz inhibitor domain maps to 1088–1138 (CEEALKPGECGDYVVRWYYDKQVNSCARFWFSGCNGSGNRFHSEKECRETC). 3 cysteine pairs are disulfide-bonded: Cys1088–Cys1138, Cys1097–Cys1121, and Cys1113–Cys1134.

The protein belongs to the VWA-containing collagen family. Trimer or homomer. Secreted into as a 135 kDa monomer under reducing conditions and as a homotrimer under non-reducing conditions. In terms of tissue distribution, expressed in skin, intestine, sternum, brain and kidney. Lower expression is also observed in heart, lung, sciatic nerve, dorsal root ganglia, peripheral nerves and calvaria of newborn mice and in intestine and brain of adult mice. Found in basement membrane surrounding a particular subset of Schwann cells in adult sciatic nerve.

It is found in the secreted. The protein localises to the extracellular space. Its subcellular location is the extracellular matrix. It localises to the basement membrane. In terms of biological role, may act as a cell-binding protein. The polypeptide is Collagen alpha-1(XXVIII) chain (Col28a1) (Mus musculus (Mouse)).